The chain runs to 489 residues: Cobyric acid synthase (489 aa).

Positions 247-439 (ALKVVVPVLP…IHGVFDEPAA (193 aa)) constitute a GATase cobBQ-type domain. C328 acts as the Nucleophile in catalysis. Residue H431 is part of the active site.

It belongs to the CobB/CobQ family. CobQ subfamily.

It functions in the pathway cofactor biosynthesis; adenosylcobalamin biosynthesis. Catalyzes amidations at positions B, D, E, and G on adenosylcobyrinic A,C-diamide. NH(2) groups are provided by glutamine, and one molecule of ATP is hydrogenolyzed for each amidation. This is Cobyric acid synthase from Marinobacter nauticus (strain ATCC 700491 / DSM 11845 / VT8) (Marinobacter aquaeolei).